The sequence spans 460 residues: Tyrosine-protein phosphatase non-receptor type 18 (460 aa).

One can recognise a Tyrosine-protein phosphatase domain in the interval Leu26–Met291. Substrate is bound by residues Asp197, Cys229–Arg235, and Gln276. The active-site Phosphocysteine intermediate is Cys229. The disordered stretch occupies residues Gly361–Val460. Residues Ala364–Thr378 show a composition bias toward gly residues. A Phosphotyrosine modification is found at Tyr389. Thr393 carries the phosphothreonine modification. Tyr426 bears the Phosphotyrosine mark. Over residues Gly449–Val460 the composition is skewed to basic and acidic residues.

This sequence belongs to the protein-tyrosine phosphatase family. Non-receptor class 4 subfamily. In terms of assembly, interacts with PSTPIP1. In terms of tissue distribution, expressed in brain, colon and several tumor-derived cell lines.

Its subcellular location is the nucleus. The protein localises to the cytoplasm. It catalyses the reaction O-phospho-L-tyrosyl-[protein] + H2O = L-tyrosyl-[protein] + phosphate. Differentially dephosphorylate autophosphorylated tyrosine kinases which are known to be overexpressed in tumor tissues. This Homo sapiens (Human) protein is Tyrosine-protein phosphatase non-receptor type 18 (PTPN18).